The chain runs to 341 residues: Serpentine receptor class beta-3 (341 aa).

The Extracellular portion of the chain corresponds to 1–23 (MLETNDSVCELAYQLAYHPVYRS). Residue asparagine 5 is glycosylated (N-linked (GlcNAc...) asparagine). The chain crosses the membrane as a helical span at residues 24 to 44 (SQFWSMLVSSLSIPALIYFIT). Over 45–58 (RKIFFLHFHGNLKC) the chain is Cytoplasmic. Residues 59-79 (LLIVYFICNLLFSMALCFAFF) form a helical membrane-spanning segment. Over 80–103 (YQFLIPFFVTSKCQLLINTTLFKW) the chain is Extracellular. N-linked (GlcNAc...) asparagine glycosylation is present at asparagine 97. The chain crosses the membrane as a helical span at residues 104–124 (GQICSFLLLTSSMLLPIGFSI). The Cytoplasmic portion of the chain corresponds to 125 to 141 (ERFVALGNAQKYESSRT). The helical transmembrane segment at 142–162 (FLGPVIIFIIIAVDFSIIFSV) threads the bilayer. The Extracellular segment spans residues 163-187 (YKNEPFTEGFYSFILVPSTTASQIN). A helical membrane pass occupies residues 188 to 208 (MYFFVLLFVKIFNLLLNCILL). Residues 209 to 237 (RIHKKIRIKYYSLSVRYEMEEILQSSKFT) lie on the Cytoplasmic side of the membrane. Residues 238–258 (FIIRFTHLLFFGFYVVVILFV) traverse the membrane as a helical segment. At 259–276 (RIMGESFFNGTLNYSVAR) the chain is on the extracellular side. N-linked (GlcNAc...) asparagine glycosylation is found at asparagine 267 and asparagine 271. A helical membrane pass occupies residues 277-297 (GVFCTVPTYNLIIVIIGIKSL). Over 298–341 (RHLNLQRLNKVQSTVQIKSTGKEGSKNYEDIITNYWDSVSSRTP) the chain is Cytoplasmic.

The protein belongs to the nematode receptor-like protein srb family. In terms of tissue distribution, expressed throughout the head.

Its subcellular location is the cell membrane. The protein localises to the perikaryon. It localises to the cell projection. It is found in the dendrite. Functionally, G-protein coupled receptor. The chain is Serpentine receptor class beta-3 from Caenorhabditis elegans.